The primary structure comprises 229 residues: Uracil-DNA glycosylase (229 aa).

D65 acts as the Proton acceptor in catalysis.

This sequence belongs to the uracil-DNA glycosylase (UDG) superfamily. UNG family.

Its subcellular location is the cytoplasm. The catalysed reaction is Hydrolyzes single-stranded DNA or mismatched double-stranded DNA and polynucleotides, releasing free uracil.. Its function is as follows. Excises uracil residues from the DNA which can arise as a result of misincorporation of dUMP residues by DNA polymerase or due to deamination of cytosine. In Limosilactobacillus reuteri (strain DSM 20016) (Lactobacillus reuteri), this protein is Uracil-DNA glycosylase.